Consider the following 632-residue polypeptide: Chaperone protein HtpG (632 aa).

Positions 1–343 (MSEQTINNKE…SNDLALNVSR (343 aa)) are a; substrate-binding. The b stretch occupies residues 344-560 (EILQDNKVTQ…DFEMGTQMAK (217 aa)). The c stretch occupies residues 561–632 (LLEAAGQAAP…LSAMNQLLSK (72 aa)).

This sequence belongs to the heat shock protein 90 family. In terms of assembly, homodimer.

The protein resides in the cytoplasm. Molecular chaperone. Has ATPase activity. The sequence is that of Chaperone protein HtpG from Aliivibrio salmonicida (strain LFI1238) (Vibrio salmonicida (strain LFI1238)).